The sequence spans 815 residues: Phenylalanine--tRNA ligase beta subunit (815 aa).

A tRNA-binding domain is found at 40–155 (APPFDKIVVA…EDAPVGQNIR (116 aa)). The region spanning 406–485 (PQRRPVSLRL…RIYGFERIAA (80 aa)) is the B5 domain. Residues Asp463, Asp469, Glu472, and Glu473 each coordinate Mg(2+). The 103-residue stretch at 712–814 (SKFPAAVRDL…LGEAFQARLR (103 aa)) folds into the FDX-ACB domain.

The protein belongs to the phenylalanyl-tRNA synthetase beta subunit family. Type 1 subfamily. Tetramer of two alpha and two beta subunits. Requires Mg(2+) as cofactor.

The protein resides in the cytoplasm. The enzyme catalyses tRNA(Phe) + L-phenylalanine + ATP = L-phenylalanyl-tRNA(Phe) + AMP + diphosphate + H(+). The chain is Phenylalanine--tRNA ligase beta subunit from Cupriavidus pinatubonensis (strain JMP 134 / LMG 1197) (Cupriavidus necator (strain JMP 134)).